Reading from the N-terminus, the 637-residue chain is Early transcription factor 70 kDa subunit (637 aa).

This sequence belongs to the helicase family. VETF subfamily. In terms of assembly, heterodimer of a 70 kDa and a 82 kDa subunit. Part of the early transcription complex composed of ETF, RAP94/OPG109, and the DNA-directed RNA polymerase. In terms of processing, apparently non-glycosylated.

Its subcellular location is the virion. Its function is as follows. Acts with RNA polymerase to initiate transcription from early gene promoters. Is recruited by the RPO-associated protein of 94 kDa RAP94/OPG109 to form the early transcription complex, which also contains the core RNA polymerase. ETF heterodimer binds to early gene promoters. This chain is Early transcription factor 70 kDa subunit (OPG118), found in Monkeypox virus.